A 358-amino-acid chain; its full sequence is Type II restriction enzyme CviJI (358 aa).

Mg(2+) serves as cofactor.

The catalysed reaction is Endonucleolytic cleavage of DNA to give specific double-stranded fragments with terminal 5'-phosphates.. In terms of biological role, a P subtype restriction enzyme that recognizes the double-stranded sequence 5'-RGCY-3' and cleaves after G-2. In the presence of ATP, there is a relaxation of its specificity and it can cleave 5'-RGCN-3' and 5'-YGCY-3', but not 5'-YGCR-3' (R.CviJI* activity). In Paramecium bursaria Chlorella virus IL3A (PBCV-IL3A), this protein is Type II restriction enzyme CviJI.